Consider the following 166-residue polypeptide: SRAVADSWMDEVIKLCGRELVRAQIAICGMSTWSKRSLSQEDAPQTPRPVAEIVPSFINKDTETIIIMLEFIANLPPELKAALSERQPSLPEPQQYVPALKDSNLSFEEFKKLIRNRQSEAADSNPSELKYLGLDTHSQKKRQPYVALFEKCCLIGCTKRSLANYC.

Positions Ser-1–Ala-5 are cleaved as a signal peptide. Disulfide bonds link Cys-16–Cys-153, Cys-28–Cys-166, and Cys-152–Cys-157. A propeptide spans Ser-37–Gln-139 (connecting peptide).

It belongs to the insulin family. Heterodimer of a B chain and an A chain linked by two disulfide bonds. As to expression, expressed in the corpus luteum of pregnancy but not in the placenta.

It localises to the secreted. Relaxin is an ovarian hormone that acts with estrogen to produce dilatation of the birth canal in many mammals. May be involved in remodeling of connective tissues during pregnancy, promoting growth of pubic ligaments and ripening of the cervix. In Pan troglodytes (Chimpanzee), this protein is Prorelaxin H1 (RNL1).